The chain runs to 1527 residues: uncharacterized protein (1527 aa).

Coiled coils occupy residues 262–293, 699–751, 905–932, and 1217–1255; these read NVEISRDKIKKLKDKNEIFNQLINEFGENINE, QQQQ…SEKL, NNLNIINNNQENNNNNNNDLKETIENQI, and KIISSELELEQQQQQQQQQQQQQQQQQQQQQQQQQQKSS. Residues 683 to 734 form a disordered region; the sequence is TNQEQEQDQQDQPPPPQQQQEQQQEQQQQQEQQQQQDQQQQDQQQDQQEKQQ. The span at 700–728 shows a compositional bias: low complexity; sequence QQQEQQQEQQQQQEQQQQQDQQQQDQQQD.

This is an uncharacterized protein from Dictyostelium discoideum (Social amoeba).